The following is a 519-amino-acid chain: Sodium-dependent dicarboxylate transporter SdcS (519 aa).

14 helical membrane passes run V29 to F49, V59 to I79, A103 to M123, I136 to G156, S159 to I179, A201 to T221, F241 to I261, K297 to L317, F322 to I342, L362 to E382, L395 to L415, I428 to V448, A451 to F471, and L490 to I510.

The protein belongs to the SLC13A/DASS transporter (TC 2.A.47) family. NADC subfamily.

The protein resides in the cell membrane. In terms of biological role, mediates the transport of dicarboxylates across the cytoplasmic membrane via a Na(+)-electrochemical gradient. The protein is Sodium-dependent dicarboxylate transporter SdcS (sdcS) of Staphylococcus saprophyticus subsp. saprophyticus (strain ATCC 15305 / DSM 20229 / NCIMB 8711 / NCTC 7292 / S-41).